A 610-amino-acid chain; its full sequence is E-selectin (610 aa).

A signal peptide spans Met1 to Ala21. A C-type lectin domain is found at Trp22–Tyr139. Residues Trp22–Pro556 are Extracellular-facing. Residue Asn25 is glycosylated (N-linked (GlcNAc...) asparagine). 5 disulfide bridges follow: Cys40/Cys138, Cys111/Cys130, Cys143/Cys154, Cys148/Cys163, and Cys165/Cys174. 3 residues coordinate Ca(2+): Glu101, Asn103, and Glu109. Residues Glu101–Glu109, Glu113–Arg118, and Asn126–Glu128 contribute to the a carbohydrate site. Ca(2+) contacts are provided by Asn126 and Asp127. The 36-residue stretch at Thr140–Glu175 folds into the EGF-like domain. N-linked (GlcNAc...) asparagine glycans are attached at residues Asn145 and Asn160. Sushi domains follow at residues Val178 to Val239, Val240 to Ala301, Thr303 to Ala364, Gln366 to Ala427, Arg429 to Val490, and Val491 to Ala549. Residues Asn179, Asn199, and Asn203 are each glycosylated (N-linked (GlcNAc...) asparagine). Cystine bridges form between Cys180–Cys224, Cys193–Cys206, Cys210–Cys237, Cys242–Cys286, Cys255–Cys268, Cys272–Cys299, Cys304–Cys349, Cys335–Cys362, Cys367–Cys412, Cys398–Cys425, Cys430–Cys475, Cys461–Cys488, Cys493–Cys534, and Cys520–Cys547. Asn265 carries N-linked (GlcNAc...) asparagine glycosylation. 2 N-linked (GlcNAc...) asparagine glycosylation sites follow: Asn312 and Asn332. 2 N-linked (GlcNAc...) asparagine glycosylation sites follow: Asn503 and Asn527. Residues Leu557–Leu578 traverse the membrane as a helical segment. At Arg579–Leu610 the chain is on the cytoplasmic side.

Belongs to the selectin/LECAM family. As to quaternary structure, interacts with SELPLG/PSGL1 and PODXL2 through the sialyl Lewis X epitope. SELPLG sulfation appears not to be required for this interaction.

It is found in the cell membrane. Functionally, cell-surface glycoprotein having a role in immunoadhesion. Mediates in the adhesion of blood neutrophils in cytokine-activated endothelium through interaction with SELPLG/PSGL1. May have a role in capillary morphogenesis. The protein is E-selectin (SELE) of Homo sapiens (Human).